Here is a 297-residue protein sequence, read N- to C-terminus: UDP-N-acetylenolpyruvoylglucosamine reductase (297 aa).

In terms of domain architecture, FAD-binding PCMH-type spans K24–G189. R169 is an active-site residue. S218 (proton donor) is an active-site residue. The active site involves E289.

It belongs to the MurB family. Requires FAD as cofactor.

The protein localises to the cytoplasm. It carries out the reaction UDP-N-acetyl-alpha-D-muramate + NADP(+) = UDP-N-acetyl-3-O-(1-carboxyvinyl)-alpha-D-glucosamine + NADPH + H(+). It participates in cell wall biogenesis; peptidoglycan biosynthesis. In terms of biological role, cell wall formation. The chain is UDP-N-acetylenolpyruvoylglucosamine reductase from Rickettsia canadensis (strain McKiel).